The chain runs to 554 residues: CTP synthase (554 aa).

The interval 1–265 (MTPLIFVTGG…DELVIVQFKL (265 aa)) is amidoligase domain. Residue Ser-13 participates in CTP binding. Ser-13 serves as a coordination point for UTP. ATP is bound by residues 14 to 19 (SLGKGI) and Asp-71. Mg(2+) contacts are provided by Asp-71 and Glu-139. Residues 146-148 (DIE), 186-191 (KTKPTQ), and Lys-222 each bind CTP. UTP contacts are provided by residues 186 to 191 (KTKPTQ) and Lys-222. Positions 292–545 (TIAVVGKYVD…VRAAREKKAG (254 aa)) constitute a Glutamine amidotransferase type-1 domain. An L-glutamine-binding site is contributed by Gly-353. Residue Cys-380 is the Nucleophile; for glutamine hydrolysis of the active site. L-glutamine-binding positions include 381–384 (YGMQ), Glu-404, and Arg-471. Residues His-518 and Glu-520 contribute to the active site.

Belongs to the CTP synthase family. Homotetramer.

It carries out the reaction UTP + L-glutamine + ATP + H2O = CTP + L-glutamate + ADP + phosphate + 2 H(+). The catalysed reaction is L-glutamine + H2O = L-glutamate + NH4(+). It catalyses the reaction UTP + NH4(+) + ATP = CTP + ADP + phosphate + 2 H(+). Its pathway is pyrimidine metabolism; CTP biosynthesis via de novo pathway; CTP from UDP: step 2/2. Allosterically activated by GTP, when glutamine is the substrate; GTP has no effect on the reaction when ammonia is the substrate. The allosteric effector GTP functions by stabilizing the protein conformation that binds the tetrahedral intermediate(s) formed during glutamine hydrolysis. Inhibited by the product CTP, via allosteric rather than competitive inhibition. In terms of biological role, catalyzes the ATP-dependent amination of UTP to CTP with either L-glutamine or ammonia as the source of nitrogen. Regulates intracellular CTP levels through interactions with the four ribonucleotide triphosphates. In Xanthomonas oryzae pv. oryzae (strain MAFF 311018), this protein is CTP synthase.